Here is a 292-residue protein sequence, read N- to C-terminus: METKTAKLLDGKAIAAKIQQELSVAITQLQPEIGRPPGLAVLMVGDNPASAAYVRNKEKACAKVGIASFGKHFPAETTFRELEKVIAALNDDERVDGILVQLPLPDHLDAVALLHQIDPDKDADGLHPVNLGRLVRGEIGLRSCTPDGVMRLLQEYEIPLQGKQAVVVGRSILVGKPMALMLLEADATVTIAHSRSHDLKSITQNADILIAAAGRPGLITADMVKPGAVVVDVGMNRVTDASGKSRLIGDVDFESTAGVAGFITPVPGGVGPMTVAILLQNTFTSYSRAAKK.

Residues 169–171 (GRS) and Ser194 each bind NADP(+).

It belongs to the tetrahydrofolate dehydrogenase/cyclohydrolase family. Homodimer.

The catalysed reaction is (6R)-5,10-methylene-5,6,7,8-tetrahydrofolate + NADP(+) = (6R)-5,10-methenyltetrahydrofolate + NADPH. It catalyses the reaction (6R)-5,10-methenyltetrahydrofolate + H2O = (6R)-10-formyltetrahydrofolate + H(+). Its pathway is one-carbon metabolism; tetrahydrofolate interconversion. Catalyzes the oxidation of 5,10-methylenetetrahydrofolate to 5,10-methenyltetrahydrofolate and then the hydrolysis of 5,10-methenyltetrahydrofolate to 10-formyltetrahydrofolate. In Nostoc punctiforme (strain ATCC 29133 / PCC 73102), this protein is Bifunctional protein FolD.